The following is a 317-amino-acid chain: Eukaryotic translation initiation factor 2 subunit 2 (317 aa).

The disordered stretch occupies residues 1 to 146; it reads MSATEEENVL…KEKTITTSDG (146 aa). Positions 79-90 are enriched in basic and acidic residues; that stretch reads AIEKLENEGAHD. The span at 109 to 125 shows a compositional bias: low complexity; that stretch reads KSSTTTTTSTTTTTTEP. A C4-type zinc finger spans residues 222 to 246; the sequence is HVYNYVFAELGTNGSIDGNQRLVIR.

The protein belongs to the eIF-2-beta/eIF-5 family. In terms of assembly, eukaryotic translation initiation factor 2 eIF2 is a heterotrimeric complex composed of an alpha, a beta and a gamma subunit.

It localises to the cytoplasm. The protein resides in the cytosol. Component of the eIF2 complex that functions in the early steps of protein synthesis by forming a ternary complex with GTP and initiator tRNA. This complex binds to a 40S ribosomal subunit, followed by mRNA binding to form a 43S pre-initiation complex (43S PIC). Junction of the 60S ribosomal subunit to form the 80S initiation complex is preceded by hydrolysis of the GTP bound to eIF2 and release of an eIF2-GDP binary complex. In order for eIF2 to recycle and catalyze another round of initiation, the GDP bound to eIF2 must exchange with GTP by way of a reaction catalyzed by eIF2B. This chain is Eukaryotic translation initiation factor 2 subunit 2 (eif2s2), found in Dictyostelium discoideum (Social amoeba).